A 71-amino-acid polypeptide reads, in one-letter code: Equinin B (71 aa).

The N-terminal stretch at 1 to 11 is a signal peptide; it reads MAVIMVDQAEG. A propeptide spanning residues 46-71 is cleaved from the precursor; it reads GDEPQQMALDDESDPLVILPNNYNDY.

Contains 4 disulfide bonds.

It is found in the secreted. It localises to the target cell membrane. Functionally, antimicrobial peptide with inhibitory activity against both Gram-positive and Gram-negative bacteria (E.coli (MIC=0.25 ug/ml), M.lysodeikticus (MIC=0.25 ug/ml), and V.alginolyticus (MIC=0.25 ug/ml)). Does not show hemolytic activity. The chain is Equinin B from Actinia equina (Beadlet anemone).